A 33-amino-acid polypeptide reads, in one-letter code: Brevinin-2HSb (33 aa).

Cys27 and Cys33 form a disulfide bridge.

Expressed by the skin glands.

The protein resides in the secreted. In terms of biological role, has antibacterial activity against the Gram-positive bacterium S.aureus ATCC 25923 and the Gram-negative bacterium E.coli ATCC 25726. The sequence is that of Brevinin-2HSb from Odorrana hosii (Hose's rock frog).